Consider the following 349-residue polypeptide: 4-hydroxy-2-oxovalerate aldolase 1 (349 aa).

Residues Ile9–Gln261 form the Pyruvate carboxyltransferase domain. Arg17 to Asp18 is a substrate binding site. Asp18 contributes to the Mn(2+) binding site. His21 functions as the Proton acceptor in the catalytic mechanism. Substrate-binding residues include Ser171 and His200. Mn(2+) contacts are provided by His200 and His202. Tyr291 serves as a coordination point for substrate.

Belongs to the 4-hydroxy-2-oxovalerate aldolase family.

The enzyme catalyses (S)-4-hydroxy-2-oxopentanoate = acetaldehyde + pyruvate. The protein is 4-hydroxy-2-oxovalerate aldolase 1 of Methylibium petroleiphilum (strain ATCC BAA-1232 / LMG 22953 / PM1).